The chain runs to 221 residues: uncharacterized protein (221 aa).

At 1–45 (MYAPIRSPITELNESTPSSIPVATSYATCSASFAKLVALLVDDMA) the chain is on the extracellular side. Residues 46 to 66 (GLSIVLSEIYIYFKLLFLIVI) form a helical membrane-spanning segment. The Cytoplasmic portion of the chain corresponds to 67–221 (TESIQNKLED…KYIVVIKVEQ (155 aa)).

Its subcellular location is the host membrane. This is an uncharacterized protein from Acidianus filamentous virus 1 (isolate United States/Yellowstone) (AFV-1).